The primary structure comprises 673 residues: F-box/LRR-repeat protein 17 (673 aa).

The segment at 1–39 is disordered; that stretch reads MGHVAPHASKKEHVAPHAAEKDHVAPHASKKEHVAPHAA. Over residues 9 to 39 the composition is skewed to basic and acidic residues; sequence SKKEHVAPHAAEKDHVAPHASKKEHVAPHAA. One can recognise an F-box domain in the interval 291–338; it reads PLHINQLPSSLLLKIFSNLSLNERCILASLVCKYWRDLCLDSQFWKQL.

It belongs to the FBXL17 family. As to quaternary structure, part of the SCF (SKP1-CUL1-F-box) E3 ubiquitin-protein ligase complex SCF(FBXL17). Interacts with BTB domain-containing proteins; specifically recognizes and binds a conserved degron of non-consecutive residues present at the interface of BTB dimers of aberrant composition. In terms of tissue distribution, expressed in the neuro-ectoderm of embryos.

It localises to the cytoplasm. Its subcellular location is the nucleus. Functionally, substrate-recognition component of the SCF(FBXL17) E3 ubiquitin ligase complex, a key component of a quality control pathway required to ensure functional dimerization of BTB domain-containing proteins (dimerization quality control, DQC). FBXL17 specifically recognizes and binds a conserved degron of non-consecutive residues present at the interface of BTB dimers of aberrant composition: aberrant BTB dimer are then ubiquitinated by the SCF(FBXL17) complex and degraded by the proteasome. The ability of the SCF(FBXL17) complex to eliminate compromised BTB dimers is required for the differentiation and survival of neural crest and neuronal cells. The protein is F-box/LRR-repeat protein 17 of Xenopus laevis (African clawed frog).